We begin with the raw amino-acid sequence, 279 residues long: Shikimate dehydrogenase (NADP(+)) (279 aa).

Residues 14-16 and Thr63 contribute to the shikimate site; that span reads SIS. The Proton acceptor role is filled by Lys67. Residue Glu79 participates in NADP(+) binding. Shikimate-binding residues include Asn88 and Asp103. NADP(+) is bound by residues 127–131, 151–156, and Met219; these read GAGGA and NRTYEK. Tyr221 lines the shikimate pocket. An NADP(+)-binding site is contributed by Gly242.

It belongs to the shikimate dehydrogenase family. Homodimer.

The enzyme catalyses shikimate + NADP(+) = 3-dehydroshikimate + NADPH + H(+). It participates in metabolic intermediate biosynthesis; chorismate biosynthesis; chorismate from D-erythrose 4-phosphate and phosphoenolpyruvate: step 4/7. Functionally, involved in the biosynthesis of the chorismate, which leads to the biosynthesis of aromatic amino acids. Catalyzes the reversible NADPH linked reduction of 3-dehydroshikimate (DHSA) to yield shikimate (SA). The protein is Shikimate dehydrogenase (NADP(+)) of Caldicellulosiruptor saccharolyticus (strain ATCC 43494 / DSM 8903 / Tp8T 6331).